We begin with the raw amino-acid sequence, 1163 residues long: NACHT, LRR and PYD domains-containing protein 5 (1163 aa).

Basic and acidic residues-rich tracts occupy residues 1 to 42, 56 to 94, and 108 to 127; these read MGPP…KDQG, PEKE…KDQG, and PEKD…EQKS. The interval 1–201 is disordered; that stretch reads MGPPEKESKA…TEADKDNGGD (201 aa). The span at 128–137 shows a compositional bias: polar residues; the sequence is ESTMSPSENV. Residues 153–173 show a composition bias toward basic and acidic residues; sequence ASERKMTSPENDSKSIQKDQG. Positions 243–565 constitute an NACHT domain; it reads HTIILHGRPG…AALYYVLEGL (323 aa). 249-256 provides a ligand contact to ATP; that stretch reads GRPGVGKS. LRR repeat units follow at residues 801-822, 830-851, 858-878, 887-906, 915-935, 944-964, 972-993, 1001-1022, 1029-1050, 1058-1079, and 1086-1107; these read NLKY…LACE, SVET…MIST, RLKC…ISLG, LLQK…CHLL, NLTH…QQLC, ALQR…GFLA, KLTH…LLCE, YLQE…DLAC, HLKS…TLCE, SLRR…ALSL, and HLNS…KLCS.

The protein belongs to the NLRP family. As to quaternary structure, component of the subcortical maternal complex (SCMC), at least composed of NLRP5, KHDC3, OOEP, and TLE6. Within the complex, interacts with OOEP, KHDC3 and TLE6. The SCMC may facilitate translocation of its components between the nuclear and cytoplasmic compartments. As part of the SCMC interacts with the SCMC-associated protein ZBED3. As part of the SCMC interacts with the SCMC-associated protein CFL1/Cofilin-1. Interacts with PRKCE. Interacts with TUBB3 at cytoskeleton microtubules. In terms of processing, phosphorylated by PRKCE.

The protein localises to the cytoplasm. It localises to the cytoplasmic vesicle. The protein resides in the secretory vesicle. It is found in the cortical granule. Its subcellular location is the mitochondrion. The protein localises to the nucleus. It localises to the nucleolus. The protein resides in the golgi apparatus. Functionally, component of the subcortical maternal complex (SCMC), a multiprotein complex that plays a key role in early embryonic development. The SCMC complex is a structural constituent of cytoplasmic lattices, which consist in fibrous structures found in the cytoplasm of oocytes and preimplantation embryos. They are required to store maternal proteins critical for embryonic development, such as proteins that control epigenetic reprogramming of the preimplantation embryo, and prevent their degradation or activation. Required for the localization of cortical granules to the cortex of oocytes, via association with the cortical actin scaffold. Required for cortical actin clearance prior to oocyte exocytosis and prevention of polyspermy. Involved in regulating post-fertilization Ca(2+) release and endoplasmic reticulum storage (ER) storage via regulation of cellular localization. May be involved in the localization of mitochondria to the cytoplasm and perinuclear region in oocytes and early stage embryos, independent of its role in CPL formation. This Mus musculus (Mouse) protein is NACHT, LRR and PYD domains-containing protein 5.